The chain runs to 239 residues: Probable methylthioribulose-1-phosphate dehydratase (239 aa).

Cysteine 100 is a substrate binding site. Residues histidine 118 and histidine 120 each coordinate Zn(2+). Glutamate 141 serves as the catalytic Proton donor/acceptor. Residue histidine 197 participates in Zn(2+) binding.

It belongs to the aldolase class II family. MtnB subfamily. It depends on Zn(2+) as a cofactor.

It is found in the cytoplasm. It catalyses the reaction 5-(methylsulfanyl)-D-ribulose 1-phosphate = 5-methylsulfanyl-2,3-dioxopentyl phosphate + H2O. It functions in the pathway amino-acid biosynthesis; L-methionine biosynthesis via salvage pathway; L-methionine from S-methyl-5-thio-alpha-D-ribose 1-phosphate: step 2/6. Catalyzes the dehydration of methylthioribulose-1-phosphate (MTRu-1-P) into 2,3-diketo-5-methylthiopentyl-1-phosphate (DK-MTP-1-P). In Leishmania major, this protein is Probable methylthioribulose-1-phosphate dehydratase.